The primary structure comprises 520 residues: Bifunctional purine biosynthesis protein PurH (520 aa).

The region spanning 1–147 is the MGS-like domain; it reads MAKIGRALIS…KNNRDVTVVV (147 aa).

This sequence belongs to the PurH family.

The catalysed reaction is (6R)-10-formyltetrahydrofolate + 5-amino-1-(5-phospho-beta-D-ribosyl)imidazole-4-carboxamide = 5-formamido-1-(5-phospho-D-ribosyl)imidazole-4-carboxamide + (6S)-5,6,7,8-tetrahydrofolate. It carries out the reaction IMP + H2O = 5-formamido-1-(5-phospho-D-ribosyl)imidazole-4-carboxamide. Its pathway is purine metabolism; IMP biosynthesis via de novo pathway; 5-formamido-1-(5-phospho-D-ribosyl)imidazole-4-carboxamide from 5-amino-1-(5-phospho-D-ribosyl)imidazole-4-carboxamide (10-formyl THF route): step 1/1. The protein operates within purine metabolism; IMP biosynthesis via de novo pathway; IMP from 5-formamido-1-(5-phospho-D-ribosyl)imidazole-4-carboxamide: step 1/1. In Citrifermentans bemidjiense (strain ATCC BAA-1014 / DSM 16622 / JCM 12645 / Bem) (Geobacter bemidjiensis), this protein is Bifunctional purine biosynthesis protein PurH.